The chain runs to 392 residues: Succinate--CoA ligase [ADP-forming] subunit beta (392 aa).

The ATP-grasp domain maps to 9 to 248 (KDILRKFGVA…TNEEDPFEVE (240 aa)). Residues Lys-50, 57-59 (GRG), Glu-103, Met-106, and Glu-111 each bind ATP. Mg(2+) contacts are provided by Asn-203 and Asp-217. Residues Asn-268 and 325–327 (GIV) contribute to the substrate site.

It belongs to the succinate/malate CoA ligase beta subunit family. As to quaternary structure, heterotetramer of two alpha and two beta subunits. It depends on Mg(2+) as a cofactor.

The catalysed reaction is succinate + ATP + CoA = succinyl-CoA + ADP + phosphate. It catalyses the reaction GTP + succinate + CoA = succinyl-CoA + GDP + phosphate. It functions in the pathway carbohydrate metabolism; tricarboxylic acid cycle; succinate from succinyl-CoA (ligase route): step 1/1. Its function is as follows. Succinyl-CoA synthetase functions in the citric acid cycle (TCA), coupling the hydrolysis of succinyl-CoA to the synthesis of either ATP or GTP and thus represents the only step of substrate-level phosphorylation in the TCA. The beta subunit provides nucleotide specificity of the enzyme and binds the substrate succinate, while the binding sites for coenzyme A and phosphate are found in the alpha subunit. The protein is Succinate--CoA ligase [ADP-forming] subunit beta of Pelodictyon phaeoclathratiforme (strain DSM 5477 / BU-1).